Here is a 93-residue protein sequence, read N- to C-terminus: Small ribosomal subunit protein uS15 (93 aa).

The protein belongs to the universal ribosomal protein uS15 family. Part of the 30S ribosomal subunit. Forms a bridge to the 50S subunit in the 70S ribosome, contacting the 23S rRNA.

Functionally, one of the primary rRNA binding proteins, it binds directly to 16S rRNA where it helps nucleate assembly of the platform of the 30S subunit by binding and bridging several RNA helices of the 16S rRNA. In terms of biological role, forms an intersubunit bridge (bridge B4) with the 23S rRNA of the 50S subunit in the ribosome. The chain is Small ribosomal subunit protein uS15 from Anaplasma phagocytophilum (strain HZ).